The sequence spans 167 residues: Plastocyanin major isoform, chloroplastic (167 aa).

The transit peptide at 1–52 (MASVTSATVAIPSFTGLKASTIKSSATVRIQTAAVASPKLTVKSSLKNFGVA) directs the protein to the chloroplast. Residues 53 to 68 (AVAAAASIALAGNAMA) constitute a thylakoid transit peptide. Residues 69–167 (IEVLLGGGDG…AGMVGKVTVN (99 aa)) enclose the Plastocyanin-like domain. Residues His-105, Cys-152, His-155, and Met-160 each contribute to the Cu cation site.

It belongs to the plastocyanin family. It depends on Cu(2+) as a cofactor.

The protein resides in the plastid. Its subcellular location is the chloroplast thylakoid membrane. Functionally, participates in electron transfer between P700 and the cytochrome b6-f complex in photosystem I. Seems to be the major plastocyanin in Arabidopsis. This Arabidopsis thaliana (Mouse-ear cress) protein is Plastocyanin major isoform, chloroplastic (DRT112).